Reading from the N-terminus, the 1362-residue chain is Bromodomain-containing protein 4 (1362 aa).

Positions Met1 to Arg58 are disordered. Over residues Thr23–Thr43 the composition is skewed to low complexity. The 107-residue stretch at Arg58–Leu164 folds into the Bromo 1 domain. A Glycyl lysine isopeptide (Lys-Gly) (interchain with G-Cter in SUMO2) cross-link involves residue Lys99. Disordered regions lie at residues Val174–Thr229, Val242–Glu352, and Glu463–Lys615. A compositionally biased stretch (low complexity) spans Pro197–Pro211. 2 stretches are compositionally biased toward pro residues: residues Gln212–Ala227 and Pro243–Gln266. The span at Gln320–Pro336 shows a compositional bias: basic and acidic residues. One can recognise a Bromo 2 domain in the interval Ser348–Met457. Ser470 carries the post-translational modification Phosphoserine. The span at Lys478–Asp497 shows a compositional bias: low complexity. Phosphoserine; by CK2 is present on residues Ser484, Ser488, Ser492, Ser494, Ser498, Ser499, and Ser503. Positions Ser484 to Ser503 are NPS region. A BID region region spans residues Gln524–Ser579. A compositionally biased stretch (basic residues) spans Lys535–Arg553. Positions Lys554 to Pro570 are enriched in basic and acidic residues. Lys585 participates in a covalent cross-link: Glycyl lysine isopeptide (Lys-Gly) (interchain with G-Cter in SUMO2). The 83-residue stretch at Glu600–Gln682 folds into the NET domain. Ser601 bears the Phosphoserine mark. The segment covering Asp605 to Lys615 has biased composition (basic and acidic residues). Glycyl lysine isopeptide (Lys-Gly) (interchain with G-Cter in SUMO2) cross-links involve residues Lys645 and Lys694. A disordered region spans residues Cys674–Ser1100. Over residues Ser699–Ser712 the composition is skewed to low complexity. The span at Lys724 to Gln744 shows a compositional bias: basic residues. Pro residues-rich tracts occupy residues Ala751–Met785, Pro833–Ser846, and Pro881–Val890. Residues Met926–Gln936 show a composition bias toward low complexity. Composition is skewed to pro residues over residues Gln953–Pro964, Gln973–Pro996, and Gln1010–Ala1034. The segment covering Gln1041–Lys1050 has biased composition (basic residues). Residues Arg1047–Phe1362 are C-terminal (CTD) region. A Glycyl lysine isopeptide (Lys-Gly) (interchain with G-Cter in SUMO2) cross-link involves residue Lys1050. A compositionally biased stretch (polar residues) spans Pro1071 to Pro1091. An N6-acetyllysine; alternate modification is found at Lys1111. Lys1111 participates in a covalent cross-link: Glycyl lysine isopeptide (Lys-Gly) (interchain with G-Cter in SUMO1); alternate. Lys1111 participates in a covalent cross-link: Glycyl lysine isopeptide (Lys-Gly) (interchain with G-Cter in SUMO2); alternate. Positions His1116–Glu1339 are disordered. A phosphoserine mark is found at Ser1117 and Ser1126. The segment covering Pro1175–Ile1196 has biased composition (basic and acidic residues). Lys1197 participates in a covalent cross-link: Glycyl lysine isopeptide (Lys-Gly) (interchain with G-Cter in SUMO2). A phosphoserine mark is found at Ser1201 and Ser1204. Positions Thr1211–Ser1223 are enriched in low complexity. Residues Glu1225–Glu1284 are compositionally biased toward basic and acidic residues. Low complexity predominate over residues Gln1285 to Gln1313. Positions Gln1323 to Glu1339 are enriched in basic and acidic residues.

This sequence belongs to the BET family. As to quaternary structure, interacts with p53/TP53; the interaction is direct. Interacts (via CTD region) with CDK9 and CCNT1, acting as an associated component of P-TEFb complex. Interacts with RELA (when acetylated at 'Lys-310'). Interacts (via NET domain) with NSD3, CHD4, BICRA and ATAD5. The interaction with BICRA bridges BRD4 to the GBAF complex. Interacts (via NET domain) with JMJD6 (via JmjC and N-terminal domains); the interaction is stronger in presence of ssRNA and recruits JMJD6 on distal enhancers. Interacts with NSD3. Interacts with NIPBL. Interacts with SMC2. Interacts with NCAPD3. In terms of assembly, (Microbial infection) Interacts with bovine papillomavirus type 1 regulatory protein E2. This interactions may serve for the tethering of viral genomes to host mitotic chromosomes allowing successful partitioning of the viral genome during cell division. As to quaternary structure, (Microbial infection) Interacts with Epstein-Barr virus (EBV) protein EBNA1; this interaction facilitates transcriptional activation by EBNA1. (Microbial infection) Interacts with human herpes virus-8 (HHV-8) protein LANA. Post-translationally, phosphorylation by CK2 disrupt the intramolecular binding between the bromo domain 2 and the NPS region and promotes binding between the NPS and the BID regions, leading to activate the protein and promote binding to acetylated histones. In absence of phosphorylation, BRD4 does not localize to p53/TP53 target gene promoters, phosphorylation promoting recruitment to p53/TP53 target promoters. Ubiquitously expressed.

The protein localises to the nucleus. It localises to the chromosome. Its activity is regulated as follows. Inhibited by JQ1, a thieno-triazolo-1,4-diazepine derivative, which specifically inhibits members of the BET family (BRD2, BRD3 and BRD4). The first bromo domain is inhibited by GSK778 (iBET-BD1), which specifically inhibits the first bromo domain of members of the BET family (BRD2, BRD3 and BRD4). The second bromo domain is inhibited by ABBV-744, which specifically inhibits the second bromo domain of members of the BET family (BRD2, BRD3 and BRD4). The second bromo domain is inhibited by GSK046 (iBET-BD2), which specifically inhibits the second bromo domain of members of the BET family (BRD2, BRD3 and BRD4). Chromatin reader protein that recognizes and binds acetylated histones and plays a key role in transmission of epigenetic memory across cell divisions and transcription regulation. Remains associated with acetylated chromatin throughout the entire cell cycle and provides epigenetic memory for postmitotic G1 gene transcription by preserving acetylated chromatin status and maintaining high-order chromatin structure. During interphase, plays a key role in regulating the transcription of signal-inducible genes by associating with the P-TEFb complex and recruiting it to promoters. Also recruits P-TEFb complex to distal enhancers, so called anti-pause enhancers in collaboration with JMJD6. BRD4 and JMJD6 are required to form the transcriptionally active P-TEFb complex by displacing negative regulators such as HEXIM1 and 7SKsnRNA complex from P-TEFb, thereby transforming it into an active form that can then phosphorylate the C-terminal domain (CTD) of RNA polymerase II. Regulates differentiation of naive CD4(+) T-cells into T-helper Th17 by promoting recruitment of P-TEFb to promoters. Promotes phosphorylation of 'Ser-2' of the C-terminal domain (CTD) of RNA polymerase II. According to a report, directly acts as an atypical protein kinase and mediates phosphorylation of 'Ser-2' of the C-terminal domain (CTD) of RNA polymerase II; these data however need additional evidences in vivo. In addition to acetylated histones, also recognizes and binds acetylated RELA, leading to further recruitment of the P-TEFb complex and subsequent activation of NF-kappa-B. Also acts as a regulator of p53/TP53-mediated transcription: following phosphorylation by CK2, recruited to p53/TP53 specific target promoters. In terms of biological role, acts as a chromatin insulator in the DNA damage response pathway. Inhibits DNA damage response signaling by recruiting the condensin-2 complex to acetylated histones, leading to chromatin structure remodeling, insulating the region from DNA damage response by limiting spreading of histone H2AX/H2A.x phosphorylation. In Homo sapiens (Human), this protein is Bromodomain-containing protein 4 (BRD4).